We begin with the raw amino-acid sequence, 503 residues long: uncharacterized protein (503 aa).

The chain crosses the membrane as a helical span at residues 26-46 (ILFLLLGLIILVNISINVATA). 4 disordered regions span residues 155 to 176 (RPLS…MSQM), 311 to 381 (YDAR…ESHE), 436 to 456 (QISD…NPGG), and 472 to 503 (VQEN…GKLN). 2 stretches are compositionally biased toward basic and acidic residues: residues 311 to 322 (YDARDQWRRGTE) and 334 to 346 (NPRE…DHNS). Residues 348 to 367 (AHRQNFSSHTHSQPNHSPPQ) show a composition bias toward polar residues. A compositionally biased stretch (basic residues) spans 493–503 (SLHRSRTGKLN).

The protein resides in the membrane. This is an uncharacterized protein from Mus musculus (Mouse).